The primary structure comprises 334 residues: Ferrochelatase (334 aa).

Residues histidine 207 and glutamate 288 each contribute to the Fe cation site.

This sequence belongs to the ferrochelatase family.

It localises to the cytoplasm. It catalyses the reaction heme b + 2 H(+) = protoporphyrin IX + Fe(2+). It functions in the pathway porphyrin-containing compound metabolism; protoheme biosynthesis; protoheme from protoporphyrin-IX: step 1/1. Its function is as follows. Catalyzes the ferrous insertion into protoporphyrin IX. This is Ferrochelatase from Helicobacter pylori (strain ATCC 700392 / 26695) (Campylobacter pylori).